A 453-amino-acid chain; its full sequence is Bestrophin homolog 5 (453 aa).

The next 4 membrane-spanning stretches (helical) occupy residues 78–98 (ELIVWICAYSLVSVIYRFALT), 113–133 (DARMGYLPLNFVLGFFCNIII), 275–295 (IPLMYPQLVNMAVHTYFFLCI), and 314–334 (LYIPFMTIIEFIFYMGWLKVA).

The protein belongs to the anion channel-forming bestrophin (TC 1.A.46) family. Calcium-sensitive chloride channel subfamily. As to quaternary structure, forms oligomers.

The protein localises to the cell membrane. In terms of biological role, forms chloride channels. This is Bestrophin homolog 5 (best-5) from Caenorhabditis elegans.